We begin with the raw amino-acid sequence, 214 residues long: Phosphoenolpyruvate guanylyltransferase (214 aa).

Phosphoenolpyruvate contacts are provided by T148, G163, and S166.

Belongs to the CofC family.

The enzyme catalyses phosphoenolpyruvate + GTP + H(+) = enolpyruvoyl-2-diphospho-5'-guanosine + diphosphate. The protein operates within cofactor biosynthesis; coenzyme F420 biosynthesis. Functionally, guanylyltransferase that catalyzes the activation of phosphoenolpyruvate (PEP) as enolpyruvoyl-2-diphospho-5'-guanosine, via the condensation of PEP with GTP. It is involved in the biosynthesis of coenzyme F420, a hydride carrier cofactor. The sequence is that of Phosphoenolpyruvate guanylyltransferase from Mycobacterium tuberculosis (strain KZN 1435 / MDR).